A 188-amino-acid chain; its full sequence is Holliday junction branch migration complex subunit RuvA (188 aa).

The domain I stretch occupies residues 1-63; the sequence is MIEIIEGIYK…QEDMTIYGFD (63 aa). The tract at residues 64–142 is domain II; the sequence is SKVKKETFEK…VVEVNEEMLE (79 aa). A region of interest (flexible linker) is located at residue Glu142. The domain III stretch occupies residues 142–188; sequence EAIEALVSLGYSKTQARNAVSKVLKESPNISNVSKIIKEALKILAKI.

This sequence belongs to the RuvA family. Homotetramer. Forms an RuvA(8)-RuvB(12)-Holliday junction (HJ) complex. HJ DNA is sandwiched between 2 RuvA tetramers; dsDNA enters through RuvA and exits via RuvB. An RuvB hexamer assembles on each DNA strand where it exits the tetramer. Each RuvB hexamer is contacted by two RuvA subunits (via domain III) on 2 adjacent RuvB subunits; this complex drives branch migration. In the full resolvosome a probable DNA-RuvA(4)-RuvB(12)-RuvC(2) complex forms which resolves the HJ.

The protein localises to the cytoplasm. Functionally, the RuvA-RuvB-RuvC complex processes Holliday junction (HJ) DNA during genetic recombination and DNA repair, while the RuvA-RuvB complex plays an important role in the rescue of blocked DNA replication forks via replication fork reversal (RFR). RuvA specifically binds to HJ cruciform DNA, conferring on it an open structure. The RuvB hexamer acts as an ATP-dependent pump, pulling dsDNA into and through the RuvAB complex. HJ branch migration allows RuvC to scan DNA until it finds its consensus sequence, where it cleaves and resolves the cruciform DNA. This Fervidobacterium nodosum (strain ATCC 35602 / DSM 5306 / Rt17-B1) protein is Holliday junction branch migration complex subunit RuvA.